The chain runs to 371 residues: Solute carrier family 35 member F6 (371 aa).

An N-terminal signal peptide occupies residues 1-18 (MAWTKYQLFLAGLMLVTG). The next 2 membrane-spanning stretches (helical) occupy residues 48–68 (FLQA…FYLL) and 89–109 (LLFL…YVAL). An EamA domain is found at 104 to 160 (LMYVALNMTSASSFQMLRGAVIIFTGLFSVAFLGRRLVLSQWLGILATIAGLVVVGL). Asparagine 110 is a glycosylation site (N-linked (GlcNAc...) asparagine). The next 7 membrane-spanning stretches (helical) occupy residues 117–137 (FQML…AFLG), 140–160 (LVLS…VVGL), 176–196 (VITG…QMVL), 216–236 (GLFG…IPAG), 261–281 (LIAV…FAGI), 295–312 (LDSL…ALGW), and 317–336 (ALQI…YNGL). A disordered region spans residues 352–371 (EESEQERLLGGTRTPINDAS). Threonine 365 bears the Phosphothreonine mark.

Belongs to the SLC35F solute transporter family. In terms of assembly, interacts with SLC25A5. As to expression, expressed in pancreatic ductal adenocarcinoma (PDAC) (at protein level). Strongly expressed in prostate and thyroid. Weakly expressed in lung, heart, liver and kidney.

It localises to the mitochondrion. The protein resides in the lysosome membrane. Its function is as follows. Involved in the maintenance of mitochondrial membrane potential in pancreatic ductal adenocarcinoma (PDAC) cells. Promotes pancreatic ductal adenocarcinoma (PDAC) cell growth. May play a role as a nucleotide-sugar transporter. The sequence is that of Solute carrier family 35 member F6 (SLC35F6) from Homo sapiens (Human).